The sequence spans 247 residues: Submandibular gland secretory Glx-rich protein CB (247 aa).

The first 18 residues, 1–18 (MLVVLLTAALLALSSAQG), serve as a signal peptide directing secretion. The tract at residues 14 to 219 (SSAQGTDEEV…PQHYRGRPPK (206 aa)) is disordered. Composition is skewed to low complexity over residues 39 to 50 (PVDSGSDPPSAD), 58 to 71 (EGES…EPPA), 81 to 93 (QQEP…QEPP), 104 to 116 (QQEP…QEPP), 126 to 139 (QQQQ…QEPP), 150 to 159 (QQESTQAENQ), and 178 to 196 (VESP…QQTN). 5 consecutive repeat copies span residues 67 to 89 (EEPP…QAEN), 90 to 112 (QEPP…QAEN), 113 to 135 (QEPP…QAEN), 136 to 158 (QEPP…QAEN), and 159 to 181 (QEPS…VESP). The tract at residues 67 to 181 (EEPPATSGSE…QPEEGNVESP (115 aa)) is 5 X 23 AA tandem repeats. Residues 197-212 (PEEKPPAPKTQEEPQH) are compositionally biased toward basic and acidic residues.

In terms of tissue distribution, submandibular gland acinar cells.

It localises to the secreted. In terms of biological role, GRP proteins have a marked affinity for hydroxyapatite. They may play a role in the formation of the protective acquired pellicle at the saliva-tooth interface. The sequence is that of Submandibular gland secretory Glx-rich protein CB (Grpcb) from Rattus norvegicus (Rat).